Consider the following 361-residue polypeptide: Zygote arrest protein 1 (361 aa).

3 disordered regions span residues 1–23 (MFPA…AGDG), 98–128 (QPAG…PRSW), and 148–252 (VAGG…EQDK). Position 154 is a phosphothreonine; by CDK1 (Thr154). Ser161 is subject to Phosphoserine; by CDK1. Basic and acidic residues predominate over residues 168-177 (REPEPREVAA). The segment at 263 to 346 (KYGYYHCKDC…RQDLCGRCKD (84 aa)) adopts a 3CxxC-type zinc-finger fold.

The protein belongs to the ZAR1 family. As to quaternary structure, interacts with YBX2. In terms of processing, phosphorylation by CDK1 does not regulate formation of MARDO (mitochondria-associated ribonucleoprotein domain) membraneless compartment. Ubiquitinated and degradaded by the proteasome during oocyte meiotic maturation, leading to MARDO (mitochondria-associated ribonucleoprotein domain) membraneless compartment dissolution. In terms of tissue distribution, ovary. Expressed in primary oocytes (from primary through antral follicle stages) and during the progression from Meiosis I to Meiosis II. The mRNA is detected in growing oocytes (early primary follicle, type 3a) through fully grown oocytes (antral follicle, type 8).

The protein resides in the cytoplasm. The protein localises to the cytoplasmic ribonucleoprotein granule. MRNA-binding protein that mediates formation of MARDO (mitochondria-associated ribonucleoprotein domain), a membraneless compartment that stores maternal mRNAs in oocytes. MARDO assembly around mitochondria is directed by an increase in mitochondrial membrane potential during oocyte growth. Promotes formation of MARDO phase-separated membraneless compartment by undergoing liquid-liquid phase separation upon binding to maternal mRNAs. Binds to the 3'-UTR of maternal mRNAs. Maternal mRNAs stored in the MARDO are translationally repressed. Essential for female fertility and oocyte-to-embryo transition by coordinating maternal mRNA storage, translation and degradation. The polypeptide is Zygote arrest protein 1 (Mus musculus (Mouse)).